Reading from the N-terminus, the 240-residue chain is Putative truncated effector protein hopW1-2 (240 aa).

A disordered region spans residues 1-32; it reads MSPAQIIRTSHSFPPSFTGTSSSAENSHAQSP. A compositionally biased stretch (low complexity) spans 9–23; that stretch reads TSHSFPPSFTGTSSS.

This sequence belongs to the HopW family.

This chain is Putative truncated effector protein hopW1-2 (hopW1-2), found in Pseudomonas syringae pv. maculicola.